The primary structure comprises 202 residues: Nucleoside triphosphate pyrophosphatase (202 aa).

Residue aspartate 79 is the Proton acceptor of the active site.

The protein belongs to the Maf family. A divalent metal cation is required as a cofactor.

The protein resides in the cytoplasm. It catalyses the reaction a ribonucleoside 5'-triphosphate + H2O = a ribonucleoside 5'-phosphate + diphosphate + H(+). It carries out the reaction a 2'-deoxyribonucleoside 5'-triphosphate + H2O = a 2'-deoxyribonucleoside 5'-phosphate + diphosphate + H(+). In terms of biological role, nucleoside triphosphate pyrophosphatase. May have a dual role in cell division arrest and in preventing the incorporation of modified nucleotides into cellular nucleic acids. This Rhodopseudomonas palustris (strain BisB18) protein is Nucleoside triphosphate pyrophosphatase.